A 124-amino-acid chain; its full sequence is UPF0357 protein C1687.07 (124 aa).

An N-terminal signal peptide occupies residues 1–24 (MASFHIIVSYVTVVLAIIIAITFA).

It belongs to the UPF0357 family.

The protein is UPF0357 protein C1687.07 of Schizosaccharomyces pombe (strain 972 / ATCC 24843) (Fission yeast).